Consider the following 86-residue polypeptide: Cytochrome c oxidase subunit 6B1 (86 aa).

Position 2 is an N-acetylalanine (Ala2). A CHCH domain is found at 27–73 (TRNCWQNYLDFHRCEKAMTAKGGDVSVCEWYRRVYKSLCPISWVSTW). A Cx9C motif motif is present at residues 30–40 (CWQNYLDFHRC). Disulfide bonds link Cys30–Cys65 and Cys40–Cys54. A Cx10C motif motif is present at residues 54-65 (CEWYRRVYKSLC). Lys62 carries the N6-acetyllysine modification.

Belongs to the cytochrome c oxidase subunit 6B family. Component of the cytochrome c oxidase (complex IV, CIV), a multisubunit enzyme composed of 14 subunits. The complex is composed of a catalytic core of 3 subunits MT-CO1, MT-CO2 and MT-CO3, encoded in the mitochondrial DNA, and 11 supernumerary subunits COX4I, COX5A, COX5B, COX6A, COX6B, COX6C, COX7A, COX7B, COX7C, COX8 and NDUFA4, which are encoded in the nuclear genome. The complex exists as a monomer or a dimer and forms supercomplexes (SCs) in the inner mitochondrial membrane with NADH-ubiquinone oxidoreductase (complex I, CI) and ubiquinol-cytochrome c oxidoreductase (cytochrome b-c1 complex, complex III, CIII), resulting in different assemblies (supercomplex SCI(1)III(2)IV(1) and megacomplex MCI(2)III(2)IV(2)).

The protein resides in the mitochondrion inner membrane. Its pathway is energy metabolism; oxidative phosphorylation. Functionally, component of the cytochrome c oxidase, the last enzyme in the mitochondrial electron transport chain which drives oxidative phosphorylation. The respiratory chain contains 3 multisubunit complexes succinate dehydrogenase (complex II, CII), ubiquinol-cytochrome c oxidoreductase (cytochrome b-c1 complex, complex III, CIII) and cytochrome c oxidase (complex IV, CIV), that cooperate to transfer electrons derived from NADH and succinate to molecular oxygen, creating an electrochemical gradient over the inner membrane that drives transmembrane transport and the ATP synthase. Cytochrome c oxidase is the component of the respiratory chain that catalyzes the reduction of oxygen to water. Electrons originating from reduced cytochrome c in the intermembrane space (IMS) are transferred via the dinuclear copper A center (CU(A)) of subunit 2 and heme A of subunit 1 to the active site in subunit 1, a binuclear center (BNC) formed by heme A3 and copper B (CU(B)). The BNC reduces molecular oxygen to 2 water molecules using 4 electrons from cytochrome c in the IMS and 4 protons from the mitochondrial matrix. The sequence is that of Cytochrome c oxidase subunit 6B1 (COX6B1) from Carlito syrichta (Philippine tarsier).